Reading from the N-terminus, the 58-residue chain is Small ribosomal subunit protein bS21 (58 aa).

Residues 32–42 (IRKREHYEKPS) are compositionally biased toward basic and acidic residues. The tract at residues 32 to 58 (IRKREHYEKPSVRRKKKSEAARKRKFN) is disordered. The span at 43-58 (VRRKKKSEAARKRKFN) shows a compositional bias: basic residues.

The protein belongs to the bacterial ribosomal protein bS21 family.

This Lachnospira eligens (strain ATCC 27750 / DSM 3376 / VPI C15-48 / C15-B4) (Eubacterium eligens) protein is Small ribosomal subunit protein bS21.